We begin with the raw amino-acid sequence, 453 residues long: Probable tRNA methyltransferase 9B (453 aa).

Ser-214 carries the post-translational modification Phosphoserine.

Belongs to the methyltransferase superfamily.

Functionally, may modify wobble uridines in specific arginine and glutamic acid tRNAs. Acts as a tumor suppressor by promoting the expression of LIN9. The protein is Probable tRNA methyltransferase 9B (TRMT9B) of Bos taurus (Bovine).